A 313-amino-acid chain; its full sequence is Aspartate carbamoyltransferase catalytic subunit (313 aa).

Arg-59 and Thr-60 together coordinate carbamoyl phosphate. Residue Lys-87 participates in L-aspartate binding. Positions 109, 137, and 140 each coordinate carbamoyl phosphate. L-aspartate is bound by residues Arg-170 and Arg-224. Carbamoyl phosphate is bound by residues Gly-265 and Pro-266.

This sequence belongs to the aspartate/ornithine carbamoyltransferase superfamily. ATCase family. Heterododecamer (2C3:3R2) of six catalytic PyrB chains organized as two trimers (C3), and six regulatory PyrI chains organized as three dimers (R2).

It carries out the reaction carbamoyl phosphate + L-aspartate = N-carbamoyl-L-aspartate + phosphate + H(+). It participates in pyrimidine metabolism; UMP biosynthesis via de novo pathway; (S)-dihydroorotate from bicarbonate: step 2/3. In terms of biological role, catalyzes the condensation of carbamoyl phosphate and aspartate to form carbamoyl aspartate and inorganic phosphate, the committed step in the de novo pyrimidine nucleotide biosynthesis pathway. The chain is Aspartate carbamoyltransferase catalytic subunit from Sinorhizobium medicae (strain WSM419) (Ensifer medicae).